Consider the following 181-residue polypeptide: ATP synthase subunit b (181 aa).

The helical transmembrane segment at 16–36 (LIPPIPELVIGLIAFVIVFGF) threads the bilayer.

Belongs to the ATPase B chain family. As to quaternary structure, F-type ATPases have 2 components, F(1) - the catalytic core - and F(0) - the membrane proton channel. F(1) has five subunits: alpha(3), beta(3), gamma(1), delta(1), epsilon(1). F(0) has three main subunits: a(1), b(2) and c(10-14). The alpha and beta chains form an alternating ring which encloses part of the gamma chain. F(1) is attached to F(0) by a central stalk formed by the gamma and epsilon chains, while a peripheral stalk is formed by the delta and b chains.

Its subcellular location is the cell membrane. Its function is as follows. F(1)F(0) ATP synthase produces ATP from ADP in the presence of a proton or sodium gradient. F-type ATPases consist of two structural domains, F(1) containing the extramembraneous catalytic core and F(0) containing the membrane proton channel, linked together by a central stalk and a peripheral stalk. During catalysis, ATP synthesis in the catalytic domain of F(1) is coupled via a rotary mechanism of the central stalk subunits to proton translocation. Functionally, component of the F(0) channel, it forms part of the peripheral stalk, linking F(1) to F(0). This chain is ATP synthase subunit b, found in Streptomyces lividans.